A 542-amino-acid polypeptide reads, in one-letter code: MDNGTDSSTSKFVPEYRRTNFKNKGRFSADELRRRRDTQQVELRKAKRDEALAKRRNFIPPTDGADSDEEDESSVSADQQFYSQLQQELPQMTQQLNSDDMQEQLSATVKFRQILSREHRPPIDVVIQAGVVPRLVEFMRENQPEMLQLEAAWALTNIASGTSAQTKVVVDADAVPLFIQLLYTGSVEVKEQAIWALGNVAGDSTDYRDYVLQCNAMEPILGLFNSNKPSLIRTATWTLSNLCRGKKPQPDWSVVSQALPTLAKLIYSMDTETLVDACWAISYLSDGPQEAIQAVIDVRIPKRLVELLSHESTLVQTPALRAVGNIVTGNDLQTQVVINAGVLPALRLLLSSPKENIKKEACWTISNITAGNTEQIQAVIDANLIPPLVKLLEVAEYKTKKEACWAISNASSGGLQRPDIIRYLVSQGCIKPLCDLLEIADNRIIEVTLDALENILKMGEADKEARGLNINENADFIEKAGGMEKIFNCQQNENDKIYEKAYKIIETYFGEEEDAVDETMAPQNAGNTFGFGSNVNQQFNFN.

M1 carries the post-translational modification N-acetylmethionine. The span at 1-11 shows a compositional bias: polar residues; it reads MDNGTDSSTSK. An IBB domain is found at 1-65; the sequence is MDNGTDSSTS…RNFIPPTDGA (65 aa). The interval 1–77 is disordered; sequence MDNGTDSSTS…DEEDESSVSA (77 aa). The span at 27–53 shows a compositional bias: basic and acidic residues; that stretch reads FSADELRRRRDTQQVELRKAKRDEALA. One copy of the ARM 1; truncated repeat lies at 89–122; it reads LPQMTQQLNSDDMQEQLSATVKFRQILSREHRPP. 8 ARM repeats span residues 123–162, 163–204, 205–251, 252–288, 289–330, 331–372, 373–417, and 418–471; these read IDVV…ASGT, SAQT…AGDS, TDYR…PQPD, WSVV…SDGP, QEAI…VTGN, DLQT…TAGN, TEQI…GLQR, and PDII…LNIN. Residues 209–335 form an NLS binding site 1 region; sequence DYVLQCNAME…IVTGNDLQTQ (127 aa). The segment at 419 to 505 is NLS binding site 2; that stretch reads DIIRYLVSQG…KIYEKAYKII (87 aa). The ARM 10; atypical repeat unit spans residues 472–508; sequence ENADFIEKAGGMEKIFNCQQNENDKIYEKAYKIIETY.

This sequence belongs to the importin alpha family. As to quaternary structure, forms a complex with an importin beta subunit. In the nucleus, interacts with NUP2 which accelerate release of NLSs, NUP2 is subsequently displaced by CSE1:RanGTP which mediates re-export and recycling. Interacts with HEH2, SHE2, and STS1.

Its subcellular location is the cytoplasm. The protein resides in the perinuclear region. Functionally, functions in nuclear protein import as an adapter protein for importin beta nuclear receptors. Binds specifically and directly to substrates containing either a simple or bipartite NLS motif. Promotes docking of import substrates to the nuclear envelope. Together with importin beta KAP95, mediates nuclear import of transcription factor GCN4. Together with tethering factor STS1, targets the proteasome to the nucleus. This Saccharomyces cerevisiae (strain ATCC 204508 / S288c) (Baker's yeast) protein is Importin subunit alpha (SRP1).